The following is a 205-amino-acid chain: RNA pyrophosphohydrolase (205 aa).

Residues 6 to 149 form the Nudix hydrolase domain; the sequence is GFRPNVGIVL…KRGVYARALR (144 aa). The short motif at 38–59 is the Nudix box element; it reads GGMNTDETPVEAMYRELREETG. The tract at residues 178-205 is disordered; the sequence is GSSAAGHDRPRKRPRKRGGVLPVRINND. Positions 186–195 are enriched in basic residues; it reads RPRKRPRKRG.

It belongs to the Nudix hydrolase family. RppH subfamily. The cofactor is a divalent metal cation.

Its function is as follows. Accelerates the degradation of transcripts by removing pyrophosphate from the 5'-end of triphosphorylated RNA, leading to a more labile monophosphorylated state that can stimulate subsequent ribonuclease cleavage. This chain is RNA pyrophosphohydrolase, found in Xanthomonas campestris pv. campestris (strain 8004).